The sequence spans 232 residues: Putative B3 domain-containing protein Os11g0242900 (232 aa).

The segment at residues 1–51 (MTVELEKIAGSFFISKGWKTFVHRTGLLSGQYIRFQVLTPSKINVLLFDKK) is a DNA-binding region (TF-B3 1). A disordered region spans residues 92–121 (SHTSNKETSSDSRTESMTDIPSSSDNSGET). A compositionally biased stretch (basic and acidic residues) spans 95-107 (SNKETSSDSRTES). Positions 108-121 (MTDIPSSSDNSGET) are enriched in polar residues. Positions 140–232 (DIKNYISIIG…PNVKITIDVL (93 aa)) form a DNA-binding region, TF-B3 2.

The protein resides in the nucleus. The chain is Putative B3 domain-containing protein Os11g0242900 from Oryza sativa subsp. japonica (Rice).